The sequence spans 157 residues: 3-hydroxyacyl-[acyl-carrier-protein] dehydratase FabZ (157 aa).

His-58 is a catalytic residue.

The protein belongs to the thioester dehydratase family. FabZ subfamily.

Its subcellular location is the cytoplasm. It catalyses the reaction a (3R)-hydroxyacyl-[ACP] = a (2E)-enoyl-[ACP] + H2O. Involved in unsaturated fatty acids biosynthesis. Catalyzes the dehydration of short chain beta-hydroxyacyl-ACPs and long chain saturated and unsaturated beta-hydroxyacyl-ACPs. In Brucella abortus biovar 1 (strain 9-941), this protein is 3-hydroxyacyl-[acyl-carrier-protein] dehydratase FabZ.